A 201-amino-acid polypeptide reads, in one-letter code: Recombination protein RecR (201 aa).

The C4-type zinc-finger motif lies at 57-72 (CADCRTFTEQDVCNIC). In terms of domain architecture, Toprim spans 81–176 (GQICVVESPA…EASRIAHGVP (96 aa)).

This sequence belongs to the RecR family.

Its function is as follows. May play a role in DNA repair. It seems to be involved in an RecBC-independent recombinational process of DNA repair. It may act with RecF and RecO. This chain is Recombination protein RecR, found in Salmonella choleraesuis (strain SC-B67).